The following is a 380-amino-acid chain: Cytochrome b (380 aa).

4 helical membrane passes run phenylalanine 34–methionine 54, tryptophan 78–isoleucine 99, tryptophan 114–leucine 134, and phenylalanine 179–threonine 199. Positions 84 and 98 each coordinate heme b. Heme b contacts are provided by histidine 183 and histidine 197. Residue histidine 202 participates in a ubiquinone binding. A run of 4 helical transmembrane segments spans residues leucine 227 to serine 247, leucine 289 to histidine 309, leucine 321 to serine 341, and phenylalanine 348 to proline 368.

This sequence belongs to the cytochrome b family. As to quaternary structure, the cytochrome bc1 complex contains 11 subunits: 3 respiratory subunits (MT-CYB, CYC1 and UQCRFS1), 2 core proteins (UQCRC1 and UQCRC2) and 6 low-molecular weight proteins (UQCRH/QCR6, UQCRB/QCR7, UQCRQ/QCR8, UQCR10/QCR9, UQCR11/QCR10 and a cleavage product of UQCRFS1). This cytochrome bc1 complex then forms a dimer. Heme b is required as a cofactor.

It is found in the mitochondrion inner membrane. Component of the ubiquinol-cytochrome c reductase complex (complex III or cytochrome b-c1 complex) that is part of the mitochondrial respiratory chain. The b-c1 complex mediates electron transfer from ubiquinol to cytochrome c. Contributes to the generation of a proton gradient across the mitochondrial membrane that is then used for ATP synthesis. The polypeptide is Cytochrome b (MT-CYB) (Procellaria westlandica (Westland petrel)).